Here is a 479-residue protein sequence, read N- to C-terminus: G-rich sequence factor 1 (479 aa).

A mitochondrion-targeting transit peptide spans Met-1 to Tyr-116. 2 RRM domains span residues Tyr-149–Val-245 and Gly-249–Arg-325. Ser-243 carries the post-translational modification Phosphoserine. Ser-334 bears the Phosphoserine mark. The 80-residue stretch at His-400–Lys-479 folds into the RRM 3 domain.

In terms of assembly, monomer. Found in a complex with DDX28, DHX30, FASTKD2 and FASTKD5. Interacts with the mitochondrial RNase P complex subunit TRMT10C/MRPP1. Interacts with the 2 components of the mitochondrial degradosome complex, PNPT1 and SUPV3L1, in an RNA-dependent manner.

It is found in the mitochondrion matrix. Functionally, regulator of post-transcriptional mitochondrial gene expression, required for assembly of the mitochondrial ribosome and for recruitment of mRNA and lncRNA. Binds RNAs containing the 14 base G-rich element. Preferentially binds RNAs transcribed from three contiguous genes on the light strand of mtDNA, the ND6 mRNA, and the long non-coding RNAs for MT-CYB and MT-ND5, each of which contains multiple consensus binding sequences. Involved in the degradosome-mediated decay of non-coding mitochondrial transcripts (MT-ncRNA) and tRNA-like molecules. Acts by unwinding G-quadruplex RNA structures in MT-ncRNA, thus facilitating their degradation by the degradosome. G-quadruplexes (G4) are non-canonical 4 stranded structures formed by transcripts from the light strand of mtDNA. This chain is G-rich sequence factor 1 (Grsf1), found in Mus musculus (Mouse).